The chain runs to 236 residues: Purine nucleoside phosphorylase DeoD-type (236 aa).

H5 is a binding site for a purine D-ribonucleoside. Phosphate is bound by residues G21, R25, R44, and 88 to 91 (RVGT). Residues 180-182 (EME) and 204-205 (SD) contribute to the a purine D-ribonucleoside site. D205 serves as the catalytic Proton donor.

It belongs to the PNP/UDP phosphorylase family. In terms of assembly, homohexamer; trimer of homodimers.

It carries out the reaction a purine D-ribonucleoside + phosphate = a purine nucleobase + alpha-D-ribose 1-phosphate. The enzyme catalyses a purine 2'-deoxy-D-ribonucleoside + phosphate = a purine nucleobase + 2-deoxy-alpha-D-ribose 1-phosphate. Its function is as follows. Catalyzes the reversible phosphorolytic breakdown of the N-glycosidic bond in the beta-(deoxy)ribonucleoside molecules, with the formation of the corresponding free purine bases and pentose-1-phosphate. This is Purine nucleoside phosphorylase DeoD-type from Shewanella baltica (strain OS223).